Consider the following 291-residue polypeptide: 33 kDa chaperonin (291 aa).

2 cysteine pairs are disulfide-bonded: Cys-237–Cys-239 and Cys-270–Cys-273.

Belongs to the HSP33 family. Post-translationally, under oxidizing conditions two disulfide bonds are formed involving the reactive cysteines. Under reducing conditions zinc is bound to the reactive cysteines and the protein is inactive.

The protein localises to the cytoplasm. In terms of biological role, redox regulated molecular chaperone. Protects both thermally unfolding and oxidatively damaged proteins from irreversible aggregation. Plays an important role in the bacterial defense system toward oxidative stress. This is 33 kDa chaperonin from Bacillus cereus (strain B4264).